We begin with the raw amino-acid sequence, 309 residues long: Ribosomal RNA small subunit methyltransferase H (309 aa).

S-adenosyl-L-methionine-binding positions include 33–35 (GGH), Asp-53, Phe-79, Asp-100, and Gln-107.

It belongs to the methyltransferase superfamily. RsmH family.

The protein localises to the cytoplasm. The catalysed reaction is cytidine(1402) in 16S rRNA + S-adenosyl-L-methionine = N(4)-methylcytidine(1402) in 16S rRNA + S-adenosyl-L-homocysteine + H(+). In terms of biological role, specifically methylates the N4 position of cytidine in position 1402 (C1402) of 16S rRNA. This Clostridium botulinum (strain Langeland / NCTC 10281 / Type F) protein is Ribosomal RNA small subunit methyltransferase H.